Reading from the N-terminus, the 607-residue chain is ATP-dependent rRNA helicase SPB4 (607 aa).

A Q motif motif is present at residues 7–35; it reads WDDLEYPIQPWIRSAVDVMGFENMTPVQA. A Helicase ATP-binding domain is found at 38-224; it reads IPLFARNKDV…KTGLRNPVKV (187 aa). 51-58 lines the ATP pocket; the sequence is SVTGSGKT. Residues 172 to 175 carry the DEAD box motif; it reads DEAD. One can recognise a Helicase C-terminal domain in the interval 248–404; that stretch reads KLEQVISIIN…EISLDIVNLP (157 aa). Residues 527–607 are disordered; that stretch reads KSELKKKNMS…NGMQGSFDDL (81 aa). Residues 529-565 adopt a coiled-coil conformation; sequence ELKKKNMSWSNNTQSKEEKVERRTKMALKRKRIEEEL. Composition is skewed to basic and acidic residues over residues 543–552 and 560–570; these read SKEEKVERRT and RIEEELSKEAD. Polar residues predominate over residues 587 to 601; it reads ILQNKKSKNSNNGMQ.

Belongs to the DEAD box helicase family. DDX55/SPB4 subfamily. As to quaternary structure, component of pre-60S ribosomal complexes.

The protein localises to the nucleus. The protein resides in the nucleolus. The enzyme catalyses ATP + H2O = ADP + phosphate + H(+). Its function is as follows. ATP-binding RNA helicase involved in the biogenesis of 60S ribosomal subunits. Binds 90S pre-ribosomal particles and dissociates from pre-60S ribosomal particles after processing of 27SB pre-rRNA. Required for the normal formation of 18S rRNA through the processing of pre-rRNAs at sites A0, A1 and A2, and the normal formation of 25S and 5.8S rRNAs through the processing of pre-rRNAs at sites C1 and C2. This chain is ATP-dependent rRNA helicase SPB4, found in Vanderwaltozyma polyspora (strain ATCC 22028 / DSM 70294 / BCRC 21397 / CBS 2163 / NBRC 10782 / NRRL Y-8283 / UCD 57-17) (Kluyveromyces polysporus).